The chain runs to 752 residues: Myb-related protein A (752 aa).

A disordered region spans residues 1–22; sequence MAKRSRSEDEDDDLQYADHDYE. HTH myb-type domains follow at residues 30–81, 82–137, and 138–188; these read KKLW…QKVL, NPEL…NPEV, and KKSS…RRKV. 3 DNA-binding regions (H-T-H motif) span residues 58–81, 110–133, and 161–184; these read WTLI…QKVL, WSLI…HNHL, and WAEI…NSTM. Lys199 is covalently cross-linked (Glycyl lysine isopeptide (Lys-Gly) (interchain with G-Cter in SUMO2)). The tract at residues 230–295 is transcriptional activation domain; it reads IPGYQYVSPE…RIPSQPGSFS (66 aa). The tract at residues 298–553 is negative regulatory domain; that stretch reads SGSFLMDDNM…IRRSILGTTP (256 aa). Lys394 carries the N6-acetyllysine modification. A disordered region spans residues 451 to 480; that stretch reads RKMRVGHSPGSELRDGSLNDGGNMALKHTP. Glycyl lysine isopeptide (Lys-Gly) (interchain with G-Cter in SUMO2) cross-links involve residues Lys592 and Lys602.

As to quaternary structure, component of the DREAM complex (also named LINC complex) at least composed of E2F4, E2F5, LIN9, LIN37, LIN52, LIN54, MYBL1, MYBL2, RBL1, RBL2, RBBP4, TFDP1 and TFDP2. The complex exists in quiescent cells where it represses cell cycle-dependent genes. It dissociates in S phase when LIN9, LIN37, LIN52 and LIN54 form a subcomplex that binds to MYBL2. As to expression, expressed in a variety of lymphoid and solid tumor lines cultured in vitro.

Its subcellular location is the nucleus. Functionally, transcription factor that specifically recognizes the sequence 5'-YAAC[GT]G-3'. Acts as a master regulator of male meiosis by promoting expression of piRNAs: activates expression of both piRNA precursor RNAs and expression of protein-coding genes involved in piRNA metabolism. The piRNA metabolic process mediates the repression of transposable elements during meiosis by forming complexes composed of piRNAs and Piwi proteins and governs the methylation and subsequent repression of transposons, which is essential for the germline integrity. Transcriptional activator of SOX30. The protein is Myb-related protein A (MYBL1) of Homo sapiens (Human).